Reading from the N-terminus, the 353-residue chain is sn-glycerol-3-phosphate import ATP-binding protein UgpC 3 (353 aa).

An ABC transporter domain is found at 4 to 235 (IALKDVRKVY…PATTFVATFI (232 aa)). 37-44 (GPSGCGKS) contributes to the ATP binding site.

It belongs to the ABC transporter superfamily. sn-glycerol-3-phosphate importer (TC 3.A.1.1.3) family. The complex is composed of two ATP-binding proteins (UgpC), two transmembrane proteins (UgpA and UgpE) and a solute-binding protein (UgpB).

It localises to the cell inner membrane. The enzyme catalyses sn-glycerol 3-phosphate(out) + ATP + H2O = sn-glycerol 3-phosphate(in) + ADP + phosphate + H(+). In terms of biological role, part of the ABC transporter complex UgpBAEC involved in sn-glycerol-3-phosphate (G3P) import. Responsible for energy coupling to the transport system. In Agrobacterium fabrum (strain C58 / ATCC 33970) (Agrobacterium tumefaciens (strain C58)), this protein is sn-glycerol-3-phosphate import ATP-binding protein UgpC 3.